Consider the following 357-residue polypeptide: Probable xyloglucan endotransglucosylase/hydrolase protein 29 (357 aa).

An N-terminal signal peptide occupies residues 1-31 (MRDSIYLLWIDNRLVVIIMMVMMVSCRCVLG). Positions 32–232 (LENINPIFFD…YTFSPFVSEF (201 aa)) constitute a GH16 domain. Glu-117 serves as the catalytic Nucleophile. Residue Glu-121 is the Proton donor of the active site. Residues Glu-121 and 134 to 136 (QTN) contribute to the xyloglucan site. Residue Asn-140 is glycosylated (N-linked (GlcNAc...) asparagine). Residues 144-148 (NRGRE), 211-212 (SW), and Gly-216 each bind xyloglucan. 2 N-linked (GlcNAc...) asparagine glycosylation sites follow: Asn-241 and Asn-262. Cys-299 and Cys-312 are disulfide-bonded. Arg-304 provides a ligand contact to xyloglucan. The tract at residues 326-357 (GRLKFGGSHPKVHKARKKRRRNRSTPVVSADL) is disordered. Basic residues predominate over residues 335-348 (PKVHKARKKRRRNR). The N-linked (GlcNAc...) asparagine glycan is linked to Asn-347.

This sequence belongs to the glycosyl hydrolase 16 family. XTH group 3 subfamily. In terms of processing, contains at least one intrachain disulfide bond essential for its enzymatic activity.

The protein resides in the secreted. Its subcellular location is the cell wall. It localises to the extracellular space. The protein localises to the apoplast. It catalyses the reaction breaks a beta-(1-&gt;4) bond in the backbone of a xyloglucan and transfers the xyloglucanyl segment on to O-4 of the non-reducing terminal glucose residue of an acceptor, which can be a xyloglucan or an oligosaccharide of xyloglucan.. Its function is as follows. Catalyzes xyloglucan endohydrolysis (XEH) and/or endotransglycosylation (XET). Cleaves and religates xyloglucan polymers, an essential constituent of the primary cell wall, and thereby participates in cell wall construction of growing tissues. The polypeptide is Probable xyloglucan endotransglucosylase/hydrolase protein 29 (XTH29) (Arabidopsis thaliana (Mouse-ear cress)).